The following is an 88-amino-acid chain: Serine protease inhibitor Kazal-type 11 (88 aa).

Positions 1–24 (MSSTWIKFLFILTLVLLPYFVAES) are cleaved as a signal peptide. In terms of domain architecture, Kazal-like spans 32-87 (LRKVPNCTLYKSESDCSRTLIPVCADNQMTYYNACYFCLEQLVSPIKYKYHGICTK). N-linked (GlcNAc...) asparagine glycosylation occurs at Asn-37. Disulfide bonds link Cys-38–Cys-69, Cys-47–Cys-66, and Cys-55–Cys-85.

As to expression, expressed in epydiymis, in the caput. Also expressed in seminal vesicles.

The protein resides in the secreted. In terms of biological role, probable serine protease inhibitor. The polypeptide is Serine protease inhibitor Kazal-type 11 (Spink11) (Mus musculus (Mouse)).